A 282-amino-acid polypeptide reads, in one-letter code: MRGMKLLGALLALAALLQGAVSLKIAAFNIQTFGETKMSNATLVSYIVQILSRYDIALVQEVRDSHLTAVGKLLDNLNQDAPDTYHYVVSEPLGRNSYKERYLFVYRPDQVSAVDSYYYDDGCEPCGNDTFNREPAIVRFFSRFTEVREFAIVPLHAAPGDAVAEIDALYDVYLDVQEKWGLEDVMLMGDFNAGCSYVRPSQWSSIRLWTSPTFQWLIPDSADTTATPTHCAYDRIVVAGMLLRGAVVPDSALPFNFQAAYGLSDQLAQAISDHYPVEVMLK.

The first 22 residues, 1–22, serve as a signal peptide directing secretion; the sequence is MRGMKLLGALLALAALLQGAVS. N40 carries an N-linked (GlcNAc...) asparagine glycan. E100 is a catalytic residue. A disulfide bridge links C123 with C126. A glycan (N-linked (GlcNAc...) asparagine) is linked at N128. H156 is a catalytic residue. C195 and C231 are oxidised to a cystine.

Belongs to the DNase I family. It depends on Ca(2+) as a cofactor. Requires Mg(2+) as cofactor. In terms of tissue distribution, principally in tissues of the digestive system. Highest levels found in urine, but also relatively abundant in semen and saliva.

The protein localises to the secreted. It is found in the zymogen granule. Its subcellular location is the nucleus envelope. The enzyme catalyses Endonucleolytic cleavage to 5'-phosphodinucleotide and 5'-phosphooligonucleotide end-products.. Serum endocuclease secreted into body fluids by a wide variety of exocrine and endocrine organs. Expressed by non-hematopoietic tissues and preferentially cleaves protein-free DNA. Among other functions, seems to be involved in cell death by apoptosis. Binds specifically to G-actin and blocks actin polymerization. Together with DNASE1L3, plays a key role in degrading neutrophil extracellular traps (NETs). NETs are mainly composed of DNA fibers and are released by neutrophils to bind pathogens during inflammation. Degradation of intravascular NETs by DNASE1 and DNASE1L3 is required to prevent formation of clots that obstruct blood vessels and cause organ damage following inflammation. This chain is Deoxyribonuclease-1, found in Homo sapiens (Human).